The following is a 517-amino-acid chain: Probable bifunctional methylthioribulose-1-phosphate dehydratase/enolase-phosphatase E1 (517 aa).

The methylthioribulose-1-phosphate dehydratase stretch occupies residues M1–D242. C114 contacts substrate. Zn(2+) is bound by residues H132 and H134. The active-site Proton donor/acceptor; for methylthioribulose-1-phosphate dehydratase activity is E157. H207 provides a ligand contact to Zn(2+). The interval V278–I517 is enolase-phosphatase E1. Positions 281 and 283 each coordinate Mg(2+). Residues S416–S417 and K450 each bind substrate. D476 lines the Mg(2+) pocket.

This sequence in the N-terminal section; belongs to the aldolase class II family. MtnB subfamily. It in the C-terminal section; belongs to the HAD-like hydrolase superfamily. MasA/MtnC family. Requires Zn(2+) as cofactor. It depends on Mg(2+) as a cofactor.

It catalyses the reaction 5-(methylsulfanyl)-D-ribulose 1-phosphate = 5-methylsulfanyl-2,3-dioxopentyl phosphate + H2O. The catalysed reaction is 5-methylsulfanyl-2,3-dioxopentyl phosphate + H2O = 1,2-dihydroxy-5-(methylsulfanyl)pent-1-en-3-one + phosphate. Its pathway is amino-acid biosynthesis; L-methionine biosynthesis via salvage pathway; L-methionine from S-methyl-5-thio-alpha-D-ribose 1-phosphate: step 2/6. The protein operates within amino-acid biosynthesis; L-methionine biosynthesis via salvage pathway; L-methionine from S-methyl-5-thio-alpha-D-ribose 1-phosphate: step 3/6. It participates in amino-acid biosynthesis; L-methionine biosynthesis via salvage pathway; L-methionine from S-methyl-5-thio-alpha-D-ribose 1-phosphate: step 4/6. The sequence is that of Probable bifunctional methylthioribulose-1-phosphate dehydratase/enolase-phosphatase E1 from Sorghum bicolor (Sorghum).